Here is a 459-residue protein sequence, read N- to C-terminus: MAAPLEAQDQAPGEGEGLLIVKVEDSSWEQESAQHEDGRDSEACRQRFRQFCYGDVHGPHEAFSQLWELCCRWLRPELRTKEQILELLVLEQFLTVLPGEIQGWVREQHPGSGEEAVALVEDLQKQPVKAWRQDVPSEEAEPEAAGRGSQATGPPPTVGARRRPSVPQEQHSHSAQPPALLKEGRPGETTDTCFVSGVHGPVALGDIPFYFSREEWGTLDPAQRDLFWDIKRENSRNTTLGFGLKGQSEKSLLQEMVPVVPGQTGSDVTVSWSPEEAEAWESENRPRAALGPVVGARRGRPPTRRRQFRDLAAEKPHSCGQCGKRFRWGSDLARHQRTHTGEKPHKCPECDKSFRSSSDLVRHQGVHTGEKPFSCSECGKSFSRSAYLADHQRIHTGEKPFGCSDCGKSFSLRSYLLDHRRVHTGERPFGCGECDKSFKQRAHLIAHQSLHAKMAQPVG.

One can recognise an SCAN box domain in the interval 45 to 126 (RQRFRQFCYG…VALVEDLQKQ (82 aa)). The segment at 128 to 188 (VKAWRQDVPS…ALLKEGRPGE (61 aa)) is disordered. Residues 202–292 (VALGDIPFYF…ENRPRAALGP (91 aa)) enclose the KRAB domain. 5 C2H2-type zinc fingers span residues 317–339 (HSCGQCGKRFRWGSDLARHQRTH), 345–367 (HKCPECDKSFRSSSDLVRHQGVH), 373–395 (FSCSECGKSFSRSAYLADHQRIH), 401–423 (FGCSDCGKSFSLRSYLLDHRRVH), and 429–451 (FGCGECDKSFKQRAHLIAHQSLH).

It belongs to the krueppel C2H2-type zinc-finger protein family. In terms of tissue distribution, widely expressed with highest levels in testis.

It localises to the nucleus. May be involved in transcriptional regulation. The sequence is that of Zinc finger protein 213 (ZNF213) from Homo sapiens (Human).